A 62-amino-acid chain; its full sequence is MARYRHSRSRSRSRYRRRRRRRSRYRSRRRRSRGRRRRRSRRGRRRRGYSRRRYSRRRRRRY.

The segment at Met-1 to Tyr-62 is disordered.

This sequence belongs to the protamine P1 family. As to expression, testis.

Its subcellular location is the nucleus. The protein localises to the chromosome. Functionally, protamines substitute for histones in the chromatin of sperm during the haploid phase of spermatogenesis. They compact sperm DNA into a highly condensed, stable and inactive complex. The sequence is that of Sperm protamine P1 (PRM1) from Notamacropus eugenii (Tammar wallaby).